Here is a 23-residue protein sequence, read N- to C-terminus: Septenin 2b (23 aa).

As to expression, expressed in skin glands.

It localises to the secreted. May act as an antimicrobial peptide. This is Septenin 2b from Osteopilus septentrionalis (Cuban treefrog).